The following is a 193-amino-acid chain: Cryptic protein (193 aa).

The signal sequence occupies residues 1–25; that stretch reads MFWRKHVRILFTVTLIWQAIHLGKG. Residues Asn38 and Asn60 are each glycosylated (N-linked (GlcNAc...) asparagine). Disulfide bonds link Cys91–Cys103 and Cys105–Cys114. One can recognise an EGF-like domain in the interval 91 to 115; sequence CQNGGTCILGAFCACPKHFSGRHCE.

It belongs to the EGF-CFC (Cripto-1/FRL1/Cryptic) family.

The protein resides in the cell membrane. It localises to the secreted. May play a role in mesoderm and/or neural patterning during gastrulation. This chain is Cryptic protein (CFC1), found in Gallus gallus (Chicken).